The following is a 301-amino-acid chain: D-alanine--D-alanine ligase (301 aa).

In terms of domain architecture, ATP-grasp spans Lys99–Glu293. Ile126 to Thr181 lines the ATP pocket. Asp248, Glu260, and Asn262 together coordinate Mg(2+).

This sequence belongs to the D-alanine--D-alanine ligase family. Mg(2+) is required as a cofactor. Mn(2+) serves as cofactor.

It localises to the cytoplasm. It catalyses the reaction 2 D-alanine + ATP = D-alanyl-D-alanine + ADP + phosphate + H(+). The protein operates within cell wall biogenesis; peptidoglycan biosynthesis. Cell wall formation. This chain is D-alanine--D-alanine ligase, found in Clostridium perfringens (strain SM101 / Type A).